The sequence spans 214 residues: MELAVKTLAGDAAGNIDLDDAIFGIDEIRGDILQRTVRWQLARRQAGTHKAKSRSEVNRTTKKSIKQKGSGGARHGSRNAPIFVGGGIAHGPRVRSHAHDLPKKIRKMALAHALSSKAKDSSIMVIDTCELDSPKTKGLIQAFKDLGIENALIISGTEVNENFARAARNIPNIDVLPVAGLNVYDILRRRTLVITKEAAEGIKARFDGAKAEAE.

The segment at 43–83 (RRQAGTHKAKSRSEVNRTTKKSIKQKGSGGARHGSRNAPIF) is disordered.

The protein belongs to the universal ribosomal protein uL4 family. Part of the 50S ribosomal subunit.

Functionally, one of the primary rRNA binding proteins, this protein initially binds near the 5'-end of the 23S rRNA. It is important during the early stages of 50S assembly. It makes multiple contacts with different domains of the 23S rRNA in the assembled 50S subunit and ribosome. Its function is as follows. Forms part of the polypeptide exit tunnel. The protein is Large ribosomal subunit protein uL4 of Hyphomonas neptunium (strain ATCC 15444).